Consider the following 757-residue polypeptide: Receptor protein kinase-like protein At4g34220 (757 aa).

The first 26 residues, 1–26 (MTSNRSNLLFSLVLFHFLFVPTQLQA), serve as a signal peptide directing secretion. 7 LRR repeats span residues 104-126 (YLRI…VFNA), 128-150 (ELQS…VNSV), 152-174 (NLQL…ISLL), 176-198 (NLTV…FEAA), 199-219 (QILD…LGGK), 220-242 (SLHY…FAEK), and 245-267 (ANAT…LSLL). The helical transmembrane segment at 339–359 (IAAITVADIVGLAFIGLLVLY) threads the bilayer. The Protein kinase domain maps to 471-753 (KASAYILGTT…KELVQVLEKI (283 aa)). Ser473 carries the post-translational modification Phosphoserine. Thr494 is subject to Phosphothreonine. Ser553 carries the phosphoserine modification. The segment at 633 to 654 (ARESHTTGPTSSSPYQPPEWST) is disordered. 2 positions are modified to phosphothreonine: Thr638 and Thr639. Polar residues predominate over residues 638–654 (TTGPTSSSPYQPPEWST).

Belongs to the protein kinase superfamily.

The protein localises to the membrane. The sequence is that of Receptor protein kinase-like protein At4g34220 from Arabidopsis thaliana (Mouse-ear cress).